We begin with the raw amino-acid sequence, 290 residues long: Bifunctional protein FolD (290 aa).

NADP(+)-binding positions include 166–168 and Ile232; that span reads GAS.

The protein belongs to the tetrahydrofolate dehydrogenase/cyclohydrolase family. In terms of assembly, homodimer.

It catalyses the reaction (6R)-5,10-methylene-5,6,7,8-tetrahydrofolate + NADP(+) = (6R)-5,10-methenyltetrahydrofolate + NADPH. It carries out the reaction (6R)-5,10-methenyltetrahydrofolate + H2O = (6R)-10-formyltetrahydrofolate + H(+). Its pathway is one-carbon metabolism; tetrahydrofolate interconversion. Its function is as follows. Catalyzes the oxidation of 5,10-methylenetetrahydrofolate to 5,10-methenyltetrahydrofolate and then the hydrolysis of 5,10-methenyltetrahydrofolate to 10-formyltetrahydrofolate. This is Bifunctional protein FolD from Proteus mirabilis (strain HI4320).